The primary structure comprises 164 residues: Protein CURVATURE THYLAKOID 1A, chloroplastic (164 aa).

A chloroplast-targeting transit peptide spans 1-62 (MAISVAASSS…LQKVELLKTR (62 aa)). Ala63 carries the N-acetylalanine modification. The Stromal segment spans residues 63–93 (ASSEETSSIDTNELITDLKEKWDGLENKSTV). Residues 94–114 (LIYGGGAIVAVWLSSIVVGAI) form a helical membrane-spanning segment. Residues 115–116 (NS) lie on the Lumenal side of the membrane. Residues 117–137 (VPLLPKVMELVGLGYTGWFVY) form a helical membrane-spanning segment. Residues 138–164 (RYLLFKSSRKELAEDIESLKKKIAGSE) are Stromal-facing. A coiled-coil region spans residues 140-164 (LLFKSSRKELAEDIESLKKKIAGSE).

It belongs to the CURT family. Homo- and heterodimers and trimers.

Its subcellular location is the plastid. It is found in the chloroplast. The protein localises to the plastoglobule. It localises to the membrane. The protein resides in the chloroplast thylakoid membrane. Functionally, determines thylakoid architecture by inducing membrane curvature. The protein is Protein CURVATURE THYLAKOID 1A, chloroplastic (CURT1A) of Arabidopsis thaliana (Mouse-ear cress).